Here is a 250-residue protein sequence, read N- to C-terminus: GILT-like protein 1 (250 aa).

The first 21 residues, 1–21 (MSHKIAAVCLLMSCLIATAYS), serve as a signal peptide directing secretion. N-linked (GlcNAc...) asparagine glycosylation is present at Asn157.

The protein belongs to the GILT family. Post-translationally, conjugated to URM1, a ubiquitin-like protein.

The protein resides in the secreted. In terms of biological role, involved in the immune response to bacterial infection. The polypeptide is GILT-like protein 1 (Drosophila melanogaster (Fruit fly)).